Consider the following 481-residue polypeptide: Adenosylhomocysteinase (481 aa).

Threonine 65, aspartate 140, and glutamate 200 together coordinate substrate. An NAD(+)-binding site is contributed by 201-203 (TTT). Lysine 230 and aspartate 234 together coordinate substrate. Residues asparagine 235, 264–269 (GYGDVG), glutamate 287, asparagine 322, 343–345 (IGH), and asparagine 393 each bind NAD(+).

The protein belongs to the adenosylhomocysteinase family. NAD(+) is required as a cofactor.

Its subcellular location is the cytoplasm. The catalysed reaction is S-adenosyl-L-homocysteine + H2O = L-homocysteine + adenosine. It functions in the pathway amino-acid biosynthesis; L-homocysteine biosynthesis; L-homocysteine from S-adenosyl-L-homocysteine: step 1/1. Its function is as follows. May play a key role in the regulation of the intracellular concentration of adenosylhomocysteine. This Polynucleobacter asymbioticus (strain DSM 18221 / CIP 109841 / QLW-P1DMWA-1) (Polynucleobacter necessarius subsp. asymbioticus) protein is Adenosylhomocysteinase.